A 191-amino-acid polypeptide reads, in one-letter code: Orotate phosphoribosyltransferase (191 aa).

A 5-phospho-alpha-D-ribose 1-diphosphate-binding site is contributed by 114-122 (EDVVTTGKS). 2 residues coordinate orotate: T118 and R146.

The protein belongs to the purine/pyrimidine phosphoribosyltransferase family. PyrE subfamily. Homodimer. Mg(2+) serves as cofactor.

The enzyme catalyses orotidine 5'-phosphate + diphosphate = orotate + 5-phospho-alpha-D-ribose 1-diphosphate. The protein operates within pyrimidine metabolism; UMP biosynthesis via de novo pathway; UMP from orotate: step 1/2. Its function is as follows. Catalyzes the transfer of a ribosyl phosphate group from 5-phosphoribose 1-diphosphate to orotate, leading to the formation of orotidine monophosphate (OMP). This Clostridium botulinum (strain Langeland / NCTC 10281 / Type F) protein is Orotate phosphoribosyltransferase.